The primary structure comprises 137 residues: Large-conductance mechanosensitive channel (137 aa).

3 helical membrane-spanning segments follow: residues 15–35 (IDLA…NSIV), 38–58 (IFMP…MFIQ), and 80–100 (GNFI…FLFV).

The protein belongs to the MscL family. As to quaternary structure, homopentamer.

The protein localises to the cell inner membrane. Its function is as follows. Channel that opens in response to stretch forces in the membrane lipid bilayer. May participate in the regulation of osmotic pressure changes within the cell. The chain is Large-conductance mechanosensitive channel from Bartonella henselae (strain ATCC 49882 / DSM 28221 / CCUG 30454 / Houston 1) (Rochalimaea henselae).